The following is a 247-amino-acid chain: MIRADGRRPDELRQVTILRGWQEHAEGSALISAGRTRVLCAASVTTGVPRWRKGSGLGWVTAEYSMLPRATDTRNDRESVRGRISGRTHEISRLIGRSLRACIDLKALGENTIAIDCDVLLADGGTRTAAITGAYVALVDAARWLGRPDAIITSVSAVSVGVVKGEAMLDLAYSEDSTADTDMNVVCTGADGFVEVQGTAEGTPFDRTMLDSLLDLAVRGCAQLTAIQTEALRGPVPAGPPRPGGAR.

Phosphate-binding positions include arginine 87 and glycine 125 to arginine 127.

It belongs to the RNase PH family. As to quaternary structure, homohexameric ring arranged as a trimer of dimers.

It catalyses the reaction tRNA(n+1) + phosphate = tRNA(n) + a ribonucleoside 5'-diphosphate. In terms of biological role, phosphorolytic 3'-5' exoribonuclease that plays an important role in tRNA 3'-end maturation. Removes nucleotide residues following the 3'-CCA terminus of tRNAs; can also add nucleotides to the ends of RNA molecules by using nucleoside diphosphates as substrates, but this may not be physiologically important. Probably plays a role in initiation of 16S rRNA degradation (leading to ribosome degradation) during starvation. In Frankia casuarinae (strain DSM 45818 / CECT 9043 / HFP020203 / CcI3), this protein is Ribonuclease PH.